Consider the following 287-residue polypeptide: Mu-like prophage FluMu DNA transposition protein B (287 aa).

The region spanning 7–62 (LKQHLSDSQITQAQLAREAGVNAGALSAYLNDNYKGNIADVEAKLAAYLEKKAVQA) is the HTH cro/C1-type domain. The H-T-H motif DNA-binding region spans 18–37 (QAQLAREAGVNAGALSAYLN). 98-105 (GMSGVGKT) contacts ATP.

In terms of biological role, this protein is a non-specific DNA-binding and ATP-hydrolyzing protein essential for bacteriophage integration and replication. This chain is Mu-like prophage FluMu DNA transposition protein B, found in Haemophilus influenzae (strain ATCC 51907 / DSM 11121 / KW20 / Rd).